The following is a 170-amino-acid chain: Cyclic pyranopterin monophosphate synthase (170 aa).

Residues 75–77 and 113–114 each bind substrate; these read LCH and ME. Residue Asp128 is part of the active site.

This sequence belongs to the MoaC family. Homohexamer; trimer of dimers.

It catalyses the reaction (8S)-3',8-cyclo-7,8-dihydroguanosine 5'-triphosphate = cyclic pyranopterin phosphate + diphosphate. The protein operates within cofactor biosynthesis; molybdopterin biosynthesis. Its function is as follows. Catalyzes the conversion of (8S)-3',8-cyclo-7,8-dihydroguanosine 5'-triphosphate to cyclic pyranopterin monophosphate (cPMP). The protein is Cyclic pyranopterin monophosphate synthase of Pelotomaculum thermopropionicum (strain DSM 13744 / JCM 10971 / SI).